The chain runs to 164 residues: Envelope glycoprotein L (164 aa).

An N-terminal signal peptide occupies residues 1-24 (MRSLDRYAIFILLACGLLWRPCLS).

It belongs to the herpesviridae glycoprotein L family. As to quaternary structure, interacts with glycoprotein H (gH); this interaction is necessary for the correct processing and cell surface expression of gH. The heterodimer gH/gL seems to interact with gB trimers during fusion.

The protein localises to the virion membrane. Its subcellular location is the host cell membrane. It localises to the host Golgi apparatus. It is found in the host trans-Golgi network. In terms of biological role, the heterodimer glycoprotein H-glycoprotein L is required for the fusion of viral and plasma membranes leading to virus entry into the host cell. Acts as a functional inhibitor of gH and maintains gH in an inhibited form. Upon binding to host integrins, gL dissociates from gH leading to activation of the viral fusion glycoproteins gB and gH. This chain is Envelope glycoprotein L, found in Equine herpesvirus 2 (strain 86/87) (EHV-2).